The primary structure comprises 131 residues: Photosystem II reaction center Psb28 protein (131 aa).

The segment at 110-131 is disordered; that stretch reads NGLGYSQNQKSDQTDAATEEQA. A compositionally biased stretch (polar residues) spans 112–125; that stretch reads LGYSQNQKSDQTDA.

Belongs to the Psb28 family. In terms of assembly, part of the photosystem II complex.

It localises to the cellular thylakoid membrane. This chain is Photosystem II reaction center Psb28 protein, found in Synechococcus sp. (strain CC9902).